A 410-amino-acid polypeptide reads, in one-letter code: Chorismate synthase (410 aa).

The NADP(+) site is built by R43 and R49. FMN-binding positions include R143–S145, Q264–A265, G308, K323–T327, and R349.

This sequence belongs to the chorismate synthase family. Homotetramer. FMNH2 is required as a cofactor.

The catalysed reaction is 5-O-(1-carboxyvinyl)-3-phosphoshikimate = chorismate + phosphate. The protein operates within metabolic intermediate biosynthesis; chorismate biosynthesis; chorismate from D-erythrose 4-phosphate and phosphoenolpyruvate: step 7/7. Functionally, catalyzes the anti-1,4-elimination of the C-3 phosphate and the C-6 proR hydrogen from 5-enolpyruvylshikimate-3-phosphate (EPSP) to yield chorismate, which is the branch point compound that serves as the starting substrate for the three terminal pathways of aromatic amino acid biosynthesis. This reaction introduces a second double bond into the aromatic ring system. This is Chorismate synthase from Corynebacterium glutamicum (strain ATCC 13032 / DSM 20300 / JCM 1318 / BCRC 11384 / CCUG 27702 / LMG 3730 / NBRC 12168 / NCIMB 10025 / NRRL B-2784 / 534).